Reading from the N-terminus, the 488-residue chain is Ribulose bisphosphate carboxylase large chain (488 aa).

The substrate site is built by asparagine 128 and threonine 178. Catalysis depends on lysine 180, which acts as the Proton acceptor. Lysine 182 provides a ligand contact to substrate. Mg(2+)-binding residues include lysine 206, aspartate 208, and glutamate 209. Residue lysine 206 is modified to N6-carboxylysine. The active-site Proton acceptor is histidine 298. 3 residues coordinate substrate: arginine 299, histidine 331, and serine 383.

This sequence belongs to the RuBisCO large chain family. Type I subfamily. As to quaternary structure, heterohexadecamer of 8 large chains and 8 small chains. Requires Mg(2+) as cofactor.

The enzyme catalyses 2 (2R)-3-phosphoglycerate + 2 H(+) = D-ribulose 1,5-bisphosphate + CO2 + H2O. The catalysed reaction is D-ribulose 1,5-bisphosphate + O2 = 2-phosphoglycolate + (2R)-3-phosphoglycerate + 2 H(+). RuBisCO catalyzes two reactions: the carboxylation of D-ribulose 1,5-bisphosphate, the primary event in carbon dioxide fixation, as well as the oxidative fragmentation of the pentose substrate. Both reactions occur simultaneously and in competition at the same active site. This Xanthobacter autotrophicus (strain ATCC BAA-1158 / Py2) protein is Ribulose bisphosphate carboxylase large chain.